The sequence spans 360 residues: Histidinol-phosphate aminotransferase (360 aa).

K221 is subject to N6-(pyridoxal phosphate)lysine.

The protein belongs to the class-II pyridoxal-phosphate-dependent aminotransferase family. Histidinol-phosphate aminotransferase subfamily. As to quaternary structure, homodimer. Pyridoxal 5'-phosphate is required as a cofactor.

It carries out the reaction L-histidinol phosphate + 2-oxoglutarate = 3-(imidazol-4-yl)-2-oxopropyl phosphate + L-glutamate. It functions in the pathway amino-acid biosynthesis; L-histidine biosynthesis; L-histidine from 5-phospho-alpha-D-ribose 1-diphosphate: step 7/9. The chain is Histidinol-phosphate aminotransferase from Desulfitobacterium hafniense (strain DSM 10664 / DCB-2).